Here is a 525-residue protein sequence, read N- to C-terminus: Mannuronan C5-epimerase AlgG (525 aa).

The signal sequence occupies residues 1-29; sequence MNVQRKLASTQLKPVLLGVLLATSAWSQA. 5 PbH1 repeats span residues 287 to 309, 311 to 334, 336 to 358, 360 to 382, and 383 to 405; these read ADDV…DPHD, SERL…IVSR, VNNS…VLDR, SEHN…TLYE, and SSNN…RMRN. His308 acts as the Proton acceptor in catalysis.

This sequence belongs to the D-mannuronate C5-epimerase family.

The protein resides in the periplasm. The catalysed reaction is [(1-&gt;4)-beta-D-mannuronosyl](n) = [alginate](n). It participates in glycan biosynthesis; alginate biosynthesis. Inhibited by zinc. Its function is as follows. Catalyzes the epimerization of beta-D-mannuronate to alpha-L-guluronate during the synthesis of the linear polysaccharide alginate. In addition, is part of a periplasmic protein complex that protects alginate from degradation by AlgL by channeling the newly formed alginate polymer through a scaffold that transfers the alginate polymer through the periplasmic space to the outer membrane secretin AlgE. In Azotobacter vinelandii, this protein is Mannuronan C5-epimerase AlgG.